A 114-amino-acid chain; its full sequence is ATP synthase subunit beta, mitochondrial (114 aa).

44 to 51 (GGAGVGKT) contributes to the ATP binding site.

Belongs to the ATPase alpha/beta chains family. As to quaternary structure, F-type ATPases have 2 components, CF(1) - the catalytic core - and CF(0) - the membrane proton channel. CF(1) has five subunits: alpha(3), beta(3), gamma(1), delta(1), epsilon(1). CF(0) has three main subunits: a, b and c.

It localises to the mitochondrion. The protein localises to the mitochondrion inner membrane. It catalyses the reaction ATP + H2O + 4 H(+)(in) = ADP + phosphate + 5 H(+)(out). In terms of biological role, mitochondrial membrane ATP synthase (F(1)F(0) ATP synthase or Complex V) produces ATP from ADP in the presence of a proton gradient across the membrane which is generated by electron transport complexes of the respiratory chain. F-type ATPases consist of two structural domains, F(1) - containing the extramembraneous catalytic core, and F(0) - containing the membrane proton channel, linked together by a central stalk and a peripheral stalk. During catalysis, ATP synthesis in the catalytic domain of F(1) is coupled via a rotary mechanism of the central stalk subunits to proton translocation. Subunits alpha and beta form the catalytic core in F(1). Rotation of the central stalk against the surrounding alpha(3)beta(3) subunits leads to hydrolysis of ATP in three separate catalytic sites on the beta subunits. This Penicillium glabrum (Penicillium frequentans) protein is ATP synthase subunit beta, mitochondrial (atp2).